Consider the following 446-residue polypeptide: Na(+)-translocating NADH-quinone reductase subunit A (446 aa).

Belongs to the NqrA family. In terms of assembly, composed of six subunits; NqrA, NqrB, NqrC, NqrD, NqrE and NqrF.

It carries out the reaction a ubiquinone + n Na(+)(in) + NADH + H(+) = a ubiquinol + n Na(+)(out) + NAD(+). Functionally, NQR complex catalyzes the reduction of ubiquinone-1 to ubiquinol by two successive reactions, coupled with the transport of Na(+) ions from the cytoplasm to the periplasm. NqrA to NqrE are probably involved in the second step, the conversion of ubisemiquinone to ubiquinol. This Pasteurella multocida (strain Pm70) protein is Na(+)-translocating NADH-quinone reductase subunit A.